The sequence spans 707 residues: E3 ubiquitin-protein ligase MARCHF7 (707 aa).

Position 1 is an N-acetylmethionine (Met-1). 5 disordered regions span residues 1 to 126 (MESK…QVPR), 157 to 279 (LMDY…RRTT), 294 to 343 (FFSR…RASE), 361 to 425 (SHNH…HIFR), and 444 to 473 (AANRPQASAASSSATTGGSTSDSAQGGRNT). Residues 17-33 (SSSLSARMMSGSRGSSL) are compositionally biased toward low complexity. Residues 37–48 (YHSRDSSFRLDS) are compositionally biased toward basic and acidic residues. The span at 52-65 (STSASASASPFQSA) shows a compositional bias: low complexity. Polar residues-rich tracts occupy residues 66–83 (WYSESEITQGARSRSQNQ), 95–126 (SCTNCTTSAGRNVGNGLNTLSDSSWRHSQVPR), 189–212 (NSMSTLQLNTSSTNHQLPSEHQTI), and 254–270 (ISNSERVVSSQRPFQES). Positions 294-303 (FFSRRSSQDS) are enriched in low complexity. 3 stretches are compositionally biased toward polar residues: residues 304-336 (LNTRSLSSENSYVSPRILTASQSRSNVPSTSEV), 373-392 (FNQESESRNTGPWLSSSLRN), and 412-421 (IPTSDTSSRS). Residues Ser-317 and Ser-389 each carry the phosphoserine modification. Over residues 444–470 (AANRPQASAASSSATTGGSTSDSAQGG) the composition is skewed to low complexity. Residues 544 to 614 (SEEEEGDLCR…ELCKEKLELN (71 aa)) form an RING-CH-type zinc finger. The Zn(2+) site is built by Cys-552, Cys-555, Cys-570, Cys-572, His-580, Cys-583, Cys-604, and Cys-607. The residue at position 686 (Thr-686) is a Phosphothreonine. Phosphoserine is present on residues Ser-687 and Ser-691.

It is found in the cytoplasm. The catalysed reaction is S-ubiquitinyl-[E2 ubiquitin-conjugating enzyme]-L-cysteine + [acceptor protein]-L-lysine = [E2 ubiquitin-conjugating enzyme]-L-cysteine + N(6)-ubiquitinyl-[acceptor protein]-L-lysine.. It participates in protein modification; protein ubiquitination. In terms of biological role, E3 ubiquitin-protein ligase which may specifically enhance the E2 activity of HIP2. E3 ubiquitin ligases accept ubiquitin from an E2 ubiquitin-conjugating enzyme in the form of a thioester and then directly transfer the ubiquitin to targeted substrates. May be involved in T-cell proliferation by regulating LIF secretion. May play a role in lysosome homeostasis. Promotes 'Lys-6', 'Lys-11' and 'Lys-63'-linked mixed polyubiquitination on ATG14 leading to the inhibition of autophagy by impairing the interaction between ATG14 and STX7. Participates in the dopamine-mediated negative regulation of the NLRP3 inflammasome by promoting its uibiquitination and subsequent degradation. This Pongo abelii (Sumatran orangutan) protein is E3 ubiquitin-protein ligase MARCHF7 (MARCHF7).